Consider the following 350-residue polypeptide: Nicotinate-nucleotide--dimethylbenzimidazole phosphoribosyltransferase (350 aa).

Glu-317 serves as the catalytic Proton acceptor.

This sequence belongs to the CobT family.

The enzyme catalyses 5,6-dimethylbenzimidazole + nicotinate beta-D-ribonucleotide = alpha-ribazole 5'-phosphate + nicotinate + H(+). Its pathway is nucleoside biosynthesis; alpha-ribazole biosynthesis; alpha-ribazole from 5,6-dimethylbenzimidazole: step 1/2. Catalyzes the synthesis of alpha-ribazole-5'-phosphate from nicotinate mononucleotide (NAMN) and 5,6-dimethylbenzimidazole (DMB). The sequence is that of Nicotinate-nucleotide--dimethylbenzimidazole phosphoribosyltransferase from Shewanella sp. (strain MR-4).